The primary structure comprises 89 residues: Mu-like prophage FluMu DNA-binding protein Ner (89 aa).

Residues 57–76 (ERLVANAIGVPPEVIWAGRF) constitute a DNA-binding region (H-T-H motif).

The protein belongs to the ner transcriptional regulatory family.

Functionally, negative regulator of transcription starting from the Pe and Pc promoters of Mu. Also negatively regulates its own gene transcription. In Haemophilus influenzae (strain ATCC 51907 / DSM 11121 / KW20 / Rd), this protein is Mu-like prophage FluMu DNA-binding protein Ner (nlp).